Reading from the N-terminus, the 1577-residue chain is Hemolysin (1577 aa).

An N-terminal signal peptide occupies residues 1–29 (MKSKNFKLSPSGRLAASLAIIFVSLNAYG). A compositionally biased stretch (basic and acidic residues) spans 437 to 446 (EKESRSENGN). Disordered stretches follow at residues 437–467 (EKES…QTET), 1081–1103 (TDTH…GTTP), 1169–1188 (QSAS…GVQA), and 1213–1232 (KQDE…SGNL). Polar residues-rich tracts occupy residues 454-467 (LESG…QTET), 1081-1095 (TDTH…NGSA), and 1169-1184 (QSAS…NLSG).

It localises to the cell outer membrane. Its function is as follows. Bacterial hemolysins are exotoxins that attack blood cell membranes and cause cell rupture by mechanisms not clearly defined. Functionally, cell-bound hemolysin, which releases heme-iron from erythrocytes by interaction with the erythrocyte membrane. HpmA requires HpmB function. This is Hemolysin (hpmA) from Proteus mirabilis.